Reading from the N-terminus, the 263-residue chain is Urease accessory protein UreH (263 aa).

It belongs to the UreD family. UreH, UreF and UreG form a complex that acts as a GTP-hydrolysis-dependent molecular chaperone, activating the urease apoprotein by helping to assemble the nickel containing metallocenter of UreC. The UreE protein probably delivers the nickel.

It is found in the cytoplasm. Required for maturation of urease via the functional incorporation of the urease nickel metallocenter. The chain is Urease accessory protein UreH from Helicobacter acinonychis (strain Sheeba).